Here is a 373-residue protein sequence, read N- to C-terminus: Carbamoyl phosphate synthase small chain (373 aa).

Residues 1–179 (MSGKAQLVLE…AYIVEPEGPP (179 aa)) form a CPSase region. Residues Ser47, Gly230, and Gly232 each coordinate L-glutamine. The 192-residue stretch at 182 to 373 (TVAALDLGIK…QFIELMEGDR (192 aa)) folds into the Glutamine amidotransferase type-1 domain. Cys258 functions as the Nucleophile in the catalytic mechanism. 5 residues coordinate L-glutamine: Phe259, Gln262, Asn300, Gly302, and Phe303. Residues His348 and Glu350 contribute to the active site.

This sequence belongs to the CarA family. Composed of two chains; the small (or glutamine) chain promotes the hydrolysis of glutamine to ammonia, which is used by the large (or ammonia) chain to synthesize carbamoyl phosphate. Tetramer of heterodimers (alpha,beta)4.

It catalyses the reaction hydrogencarbonate + L-glutamine + 2 ATP + H2O = carbamoyl phosphate + L-glutamate + 2 ADP + phosphate + 2 H(+). It carries out the reaction L-glutamine + H2O = L-glutamate + NH4(+). The protein operates within amino-acid biosynthesis; L-arginine biosynthesis; carbamoyl phosphate from bicarbonate: step 1/1. It participates in pyrimidine metabolism; UMP biosynthesis via de novo pathway; (S)-dihydroorotate from bicarbonate: step 1/3. Functionally, small subunit of the glutamine-dependent carbamoyl phosphate synthetase (CPSase). CPSase catalyzes the formation of carbamoyl phosphate from the ammonia moiety of glutamine, carbonate, and phosphate donated by ATP, constituting the first step of 2 biosynthetic pathways, one leading to arginine and/or urea and the other to pyrimidine nucleotides. The small subunit (glutamine amidotransferase) binds and cleaves glutamine to supply the large subunit with the substrate ammonia. This is Carbamoyl phosphate synthase small chain from Mycolicibacterium paratuberculosis (strain ATCC BAA-968 / K-10) (Mycobacterium paratuberculosis).